Consider the following 205-residue polypeptide: Cyanate hydratase (205 aa).

Catalysis depends on residues R133, E136, and S159.

The protein belongs to the cyanase family.

The catalysed reaction is cyanate + hydrogencarbonate + 3 H(+) = NH4(+) + 2 CO2. Its function is as follows. Catalyzes the reaction of cyanate with bicarbonate to produce ammonia and carbon dioxide. This chain is Cyanate hydratase, found in Thalassiosira pseudonana (Marine diatom).